The primary structure comprises 898 residues: Sodium/hydrogen exchanger 5 (898 aa).

Residues 1 to 48 (MLSAALLLLPGLPLAGAGATEEPTQESGPLGEPPPGLALFRWQWHEVE) lie on the Cytoplasmic side of the membrane. The helical transmembrane segment at 49–69 (APYLVALWILVASLAKIVFHL) threads the bilayer. Over 70–76 (SRKVTSL) the chain is Extracellular. Residues 77-97 (VPESCLLILLGLVLGGIVLAV) form a helical membrane-spanning segment. Residues 98 to 106 (AKKAEYQLE) are Cytoplasmic-facing. The chain crosses the membrane as a helical span at residues 107–127 (PGTFFLFLLPPIVLDSGYFMP). Residues 128–137 (SRLFFDNLGA) lie on the Extracellular side of the membrane. Residues 138–158 (ILTYAVVGTLWNAFTTGVALW) form a helical membrane-spanning segment. At 159-176 (GLQQAGLVAPRVQAGLLD) the chain is on the cytoplasmic side. Residues 177-197 (FLLFGSLISAVDPVAVLAVFE) traverse the membrane as a helical segment. At 198–203 (EVHVNQ) the chain is on the extracellular side. The chain crosses the membrane as a helical span at residues 204 to 224 (TLFIIIFGESLLNDAVTVVLY). Residues 225–249 (KVCNSFVEMGSANVQATDYLKGVAS) are Cytoplasmic-facing. Residues 250 to 270 (LFVVSLGGAAVGLVFAFLLAL) traverse the membrane as a helical segment. At 271 to 279 (TTRFTKRVR) the chain is on the extracellular side. The chain crosses the membrane as a helical span at residues 280 to 300 (IIEPLLVFLLAYAAYLTAEMA). Residues 301–334 (SLSAILAVTMCGLGCKKYVEANISHKSRTAVKYT) lie on the Cytoplasmic side of the membrane. The helical transmembrane segment at 335–355 (MKTLASCAETVIFMLLGISAV) threads the bilayer. Residues 356–363 (DSSKWAWD) lie on the Extracellular side of the membrane. Residues 364 to 384 (SGLVLGTLFFILFFRALGVVL) traverse the membrane as a helical segment. Over 385 to 401 (QTWALNQFRLVPLDKID) the chain is Cytoplasmic. A helical transmembrane segment spans residues 402-422 (QVVMSYGGLRGAVAFALVILL). Topologically, residues 423–431 (DRTKVPAKD) are extracellular. Residues 432-452 (YFVATTIVVVFFTVIVQGLTI) traverse the membrane as a helical segment. Over 453–898 (KPLVKWLRVK…CIQFNRGGRL (446 aa)) the chain is Cytoplasmic. Disordered regions lie at residues 660–693 (FTKS…RDLG) and 826–866 (EEPQ…PQQE). Positions 663-675 (SKPRPRKTSHKKK) are enriched in basic residues. Polar residues predominate over residues 857 to 866 (ESSADIPQQE).

Belongs to the monovalent cation:proton antiporter 1 (CPA1) transporter (TC 2.A.36) family. In terms of assembly, interacts with CHP1 and CHP2. Interacts with ARRB2; facilitates the endocytosis of SLC9A5 from the plasma membrane. Interacts with RACK1; this interaction positively regulates SLC9A5 activity and promote SLC9A5 localization to focal adhesions. Interacts with SCAMP2; this interaction regulates SLC9A5 cell-surface targeting and SLC9A5 activity. Phosphorylated by PRKAA2; promotes its accumulation at the cell surface. Phosphorylated by CSNK2A1 in a manner favoring its beta-arrestin binding and endocytosis. Highest expression level is detected in brain. Expressed in hippocampal neurons (at protein level).

It localises to the cell membrane. The protein localises to the recycling endosome membrane. Its subcellular location is the cell projection. It is found in the dendritic spine membrane. The protein resides in the synaptic cell membrane. It localises to the cell junction. The protein localises to the focal adhesion. The enzyme catalyses Na(+)(in) + H(+)(out) = Na(+)(out) + H(+)(in). Functionally, plasma membrane Na(+)/H(+) antiporter. Mediates the electroneutral exchange of intracellular H(+) ions for extracellular Na(+) in 1:1 stoichiometry. Responsible for regulating intracellular pH homeostasis, in particular in neural tissues. Acts as a negative regulator of dendritic spine growth. Plays a role in postsynaptic remodeling and signaling. Can also contribute to organellar pH regulation, with consequences for receptor tyrosine kinase trafficking. This chain is Sodium/hydrogen exchanger 5 (Slc9a5), found in Mus musculus (Mouse).